A 100-amino-acid polypeptide reads, in one-letter code: Urease subunit gamma (100 aa).

It belongs to the urease gamma subunit family. Heterotrimer of UreA (gamma), UreB (beta) and UreC (alpha) subunits. Three heterotrimers associate to form the active enzyme.

It localises to the cytoplasm. It catalyses the reaction urea + 2 H2O + H(+) = hydrogencarbonate + 2 NH4(+). The protein operates within nitrogen metabolism; urea degradation; CO(2) and NH(3) from urea (urease route): step 1/1. This chain is Urease subunit gamma, found in Synechocystis sp. (strain ATCC 27184 / PCC 6803 / Kazusa).